The following is a 120-amino-acid chain: CLAVATA3/ESR (CLE)-related protein 9 (120 aa).

A signal peptide spans 1 to 26 (MTMTHLNRLILISLLFVSLLLKSSTA). Asparagine 35 is a glycosylation site (N-linked (GlcNAc...) asparagine). The tract at residues 85–120 (RSSRKQPLLSPPPPEIDPRYGVDKRLVPSGPNPLHN) is disordered. The segment covering 100 to 110 (IDPRYGVDKRL) has biased composition (basic and acidic residues). Hydroxyproline occurs at positions 112 and 115. O-linked (Ara...) hydroxyproline glycosylation is present at proline 115.

This sequence belongs to the CLV3/ESR signal peptide family. The O-glycosylation (arabinosylation) of the hydroxyproline Pro-115 enhances binding affinity of the CLE9p peptide for its receptor. As to expression, mostly expressed in leaves, flowers, stems and apex, and, to a lower extent, in seedlings, roots, siliques and pollen.

The protein localises to the secreted. The protein resides in the extracellular space. Functionally, extracellular signal peptide that regulates cell fate. Represses root apical meristem maintenance. Regulates the transition of protophloem cells from proliferation to differentiation, thus impinging on postembryonic growth capacity of the root meristem; this signaling pathway requires CRN and CLV2. This is CLAVATA3/ESR (CLE)-related protein 9 from Arabidopsis thaliana (Mouse-ear cress).